We begin with the raw amino-acid sequence, 193 residues long: MTDYLLLFVGTVLVNNFVLVKFLGLCPFMGVSKKLETAMGMGLATTFVMTLASICAWLIDTWILIPLDLIYLRTLAFILVIAVVVQFTEMVVRKTSPALYRLLGIFLPLITTNCAVLGVALLNINLGHNFLQSALYGFSAAVGFSLVMVLFAAIRERLAVADVPAPFRGNAIALITAGLMSLAFMGFSGLVKL.

The next 6 membrane-spanning stretches (helical) occupy residues 5 to 25, 47 to 67, 72 to 92, 102 to 122, 134 to 154, and 171 to 191; these read LLLF…FLGL, FVMT…LIPL, LRTL…EMVV, LLGI…VALL, ALYG…FAAI, and AIAL…SGLV.

It belongs to the NqrDE/RnfAE family. In terms of assembly, the complex is composed of six subunits: RnfA, RnfB, RnfC, RnfD, RnfE and RnfG.

The protein resides in the cell inner membrane. Its function is as follows. Part of a membrane-bound complex that couples electron transfer with translocation of ions across the membrane. The polypeptide is Ion-translocating oxidoreductase complex subunit A (Citrobacter koseri (strain ATCC BAA-895 / CDC 4225-83 / SGSC4696)).